The following is a 509-amino-acid chain: Photosystem II CP47 reaction center protein (509 aa).

The next 6 helical transmembrane spans lie at 21-36 (AVHL…WAGS), 101-115 (IGLS…IWHW), 140-156 (GIHL…FGAF), 203-218 (IAAG…FHLS), 237-252 (VLSS…AFIV), and 457-472 (SFAL…HGGR).

This sequence belongs to the PsbB/PsbC family. PsbB subfamily. As to quaternary structure, PSII is composed of 1 copy each of membrane proteins PsbA, PsbB, PsbC, PsbD, PsbE, PsbF, PsbH, PsbI, PsbJ, PsbK, PsbL, PsbM, PsbT, PsbX, PsbY, PsbZ, Psb30/Ycf12, at least 3 peripheral proteins of the oxygen-evolving complex and a large number of cofactors. It forms dimeric complexes. It depends on Binds multiple chlorophylls. PSII binds additional chlorophylls, carotenoids and specific lipids. as a cofactor.

The protein localises to the plastid. It is found in the cyanelle thylakoid membrane. Its function is as follows. One of the components of the core complex of photosystem II (PSII). It binds chlorophyll and helps catalyze the primary light-induced photochemical processes of PSII. PSII is a light-driven water:plastoquinone oxidoreductase, using light energy to abstract electrons from H(2)O, generating O(2) and a proton gradient subsequently used for ATP formation. The polypeptide is Photosystem II CP47 reaction center protein (Cyanophora paradoxa).